A 411-amino-acid polypeptide reads, in one-letter code: Epoxyqueuosine reductase (411 aa).

The active-site Proton donor is the aspartate 171. Residues 213–245 (LPLPVDKPQEEQCGRCVACMTTCPTGAIVAPYT) form the 4Fe-4S ferredoxin-type domain. [4Fe-4S] cluster-binding residues include cysteine 225, cysteine 228, cysteine 231, cysteine 235, cysteine 251, cysteine 278, cysteine 281, and cysteine 285.

It belongs to the QueG family. As to quaternary structure, monomer. Cob(II)alamin serves as cofactor. [4Fe-4S] cluster is required as a cofactor.

The protein localises to the cytoplasm. The enzyme catalyses epoxyqueuosine(34) in tRNA + AH2 = queuosine(34) in tRNA + A + H2O. Its pathway is tRNA modification; tRNA-queuosine biosynthesis. Functionally, catalyzes the conversion of epoxyqueuosine (oQ) to queuosine (Q), which is a hypermodified base found in the wobble positions of tRNA(Asp), tRNA(Asn), tRNA(His) and tRNA(Tyr). The chain is Epoxyqueuosine reductase from Yersinia pestis.